The chain runs to 284 residues: 2-dehydro-3-deoxyphosphooctonate aldolase (284 aa).

This sequence belongs to the KdsA family.

It is found in the cytoplasm. It carries out the reaction D-arabinose 5-phosphate + phosphoenolpyruvate + H2O = 3-deoxy-alpha-D-manno-2-octulosonate-8-phosphate + phosphate. It participates in carbohydrate biosynthesis; 3-deoxy-D-manno-octulosonate biosynthesis; 3-deoxy-D-manno-octulosonate from D-ribulose 5-phosphate: step 2/3. The protein operates within bacterial outer membrane biogenesis; lipopolysaccharide biosynthesis. The chain is 2-dehydro-3-deoxyphosphooctonate aldolase from Histophilus somni (strain 129Pt) (Haemophilus somnus).